Reading from the N-terminus, the 741-residue chain is Cysteine--tRNA ligase, cytoplasmic (741 aa).

C46 contributes to the Zn(2+) binding site. Residues 48–58 (PTVYDASHMGH) carry the 'HIGH' region motif. A Phosphoserine modification is found at S297. Residues C340, H365, and E369 each contribute to the Zn(2+) site. A 'KMSKS' region motif is present at residues 398–402 (KMSKS). K401 serves as a coordination point for ATP. The tract at residues 697–718 (FDENGLPTHDKEGKEVSKGQIK) is disordered. The span at 704–713 (THDKEGKEVS) shows a compositional bias: basic and acidic residues.

Belongs to the class-I aminoacyl-tRNA synthetase family. Zn(2+) serves as cofactor.

Its subcellular location is the cytoplasm. The enzyme catalyses tRNA(Cys) + L-cysteine + ATP = L-cysteinyl-tRNA(Cys) + AMP + diphosphate. The polypeptide is Cysteine--tRNA ligase, cytoplasmic (Drosophila melanogaster (Fruit fly)).